A 723-amino-acid chain; its full sequence is F-box protein MAX2 homolog B (723 aa).

The 54-residue stretch at 2–55 folds into the F-box domain; the sequence is AKTPIPFTTLNDLPDVILSNIIAAVSDTRSRNATALVCHKWLVLERSTRTSLTL.

Part of a putative SCF (SKP1/Cullin/F-box) ubiquitin ligase complex. Interacts with KAI2IA in the presence of (-)-germacrene D. Mainly expressed in fully expanded leaves, lateral roots, axillary and shoot apex, and, to a lower extent, in internodes and nodes.

The protein localises to the nucleus. Its subcellular location is the cytoplasm. Functionally, component of SCF(ASK-cullin-F-box) E3 ubiquitin ligase complexes, which may mediate the ubiquitination and subsequent proteasomal degradation of target proteins. Is necessary for responses to strigolactones and may be involved in the ubiquitin-mediated degradation of specific proteins that activate axillary growth. Targets probably SMAX1A to degradation upon the formation of an E3 SCF ubiquitin ligase complex (ASK-cullin-F-box) containing MAX2B and KAI2IA in response to (-)-germacrene D in the stigma. The chain is F-box protein MAX2 homolog B from Petunia hybrida (Petunia).